The chain runs to 944 residues: Envelope glycoprotein B (944 aa).

Disordered regions lie at residues 1–37 (MGPP…RPGS) and 68–108 (TDGG…RVTG). The N-terminal stretch at 1-55 (MGPPPPLRRQRLLLPRPSRRRPPARLASGRRSSRPGSSWTWYATLIASLVWYPTV) is a signal peptide. Positions 24–37 (ARLASGRRSSRPGS) are enriched in low complexity. Residues 56 to 785 (SSTTLEATVV…GGFVSFFTNP (730 aa)) are Virion surface-facing. Residues 71 to 85 (GATGQASGGGGGGAG) show a composition bias toward gly residues. A compositionally biased stretch (polar residues) spans 89–99 (PSESPETSADT). Residue N114 is glycosylated (N-linked (GlcNAc...) asparagine; by host). 5 disulfides stabilise this stretch: C125/C577, C142/C533, C215/C280, C372/C420, and C608/C645. The interval 182-188 (SYAYIYT) is involved in fusion and/or binding to host membrane. A glycan (N-linked (GlcNAc...) asparagine; by host) is linked at N238. The tract at residues 267–274 (GSTWLYKE) is involved in fusion and/or binding to host membrane. N369, N409, N414, N426, N481, N485, and N620 each carry an N-linked (GlcNAc...) asparagine; by host glycan. Hydrophobic membrane proximal region regions lie at residues 731 to 783 (ITSK…SFFT) and 762 to 782 (LVLG…VSFF). Residues 786–806 (FGSLTLIILVVAVVVIVFLLY) traverse the membrane as a helical segment. At 807-944 (QRQRSAVRQP…RDTGSDSELA (138 aa)) the chain is on the intravirion side. 2 disordered regions span residues 834–878 (TVTT…SATA) and 902–944 (REVP…SELA). The Internalization motif signature appears at 931–934 (YRRL).

This sequence belongs to the herpesviridae glycoprotein B family. In terms of assembly, homotrimer; disulfide-linked. Binds to heparan sulfate proteoglycans. Interacts with gH/gL heterodimer. Post-translationally, a proteolytic cleavage by host furin generates two subunits that remain linked by disulfide bonds.

Its subcellular location is the virion membrane. The protein resides in the host cell membrane. It localises to the host endosome membrane. The protein localises to the host Golgi apparatus membrane. Functionally, envelope glycoprotein that forms spikes at the surface of virion envelope. Essential for the initial attachment to heparan sulfate moieties of the host cell surface proteoglycans. Involved in fusion of viral and cellular membranes leading to virus entry into the host cell. Following initial binding to its host receptors, membrane fusion is mediated by the fusion machinery composed at least of gB and the heterodimer gH/gL. May be involved in the fusion between the virion envelope and the outer nuclear membrane during virion egress. The chain is Envelope glycoprotein B from Tupaiid herpesvirus (strain 2) (TuHV-2).